Reading from the N-terminus, the 387-residue chain is NAD(P)H oxidoreductase RTN4IP1, mitochondrial (387 aa).

The N-terminal 27 residues, 1–27, are a transit peptide targeting the mitochondrion; that stretch reads MLMCRRWLVCSLRCHYRSFSFSAARRT. The 342-residue stretch at 38-379 folds into the Enoyl reductase (ER) domain; sequence GKNDVLRFTK…QGHARGKTVV (342 aa). Positions 200, 202, 203, 223, 241, 286, 327, 329, 372, 373, and 374 each coordinate NADPH.

It belongs to the zinc-containing alcohol dehydrogenase family. Quinone oxidoreductase subfamily.

Its subcellular location is the mitochondrion matrix. It is found in the mitochondrion outer membrane. The enzyme catalyses a 3-demethylubiquinone + NADH + 2 H(+) = a 3-demethylubiquinol + NAD(+). The catalysed reaction is a 3-demethylubiquinone + NADPH + 2 H(+) = a 3-demethylubiquinol + NADP(+). It catalyses the reaction 3-demethylubiquinone-10 + NADH + 2 H(+) = 3-demethylubiquinol-10 + NAD(+). It carries out the reaction 3-demethylubiquinone-10 + NADPH + 2 H(+) = 3-demethylubiquinol-10 + NADP(+). Its pathway is cofactor biosynthesis; ubiquinone biosynthesis. In terms of biological role, NAD(P)H oxidoreductase involved in the ubiquinone biosynthetic pathway. Required for the O-methyltransferase activity of COQ3. Able to catalyze the oxidoreduction of 3-demethylubiquinone into 3-demethylubiquinol in vitro. However, it is unclear if 3-demethylubiquinone constitutes a substrate in vivo. May also play a role in the regulation of retinal ganglion cell (RGC) neurite outgrowth, and hence in the development of the inner retina and optic nerve. The chain is NAD(P)H oxidoreductase RTN4IP1, mitochondrial (rtn4ip1) from Danio rerio (Zebrafish).